The following is a 294-amino-acid chain: Epimerase family protein SDR39U1 (294 aa).

Residues 31 to 32, 58 to 59, glutamate 77, arginine 82, and valine 160 contribute to the NADP(+) site; these read SR and LA.

Belongs to the NAD(P)-dependent epimerase/dehydratase family. SDR39U1 subfamily.

Putative NADP-dependent oxidoreductase. This chain is Epimerase family protein SDR39U1 (SDR39U1), found in Bos taurus (Bovine).